The sequence spans 261 residues: Prostatic glandular kallikrein-6 (261 aa).

A signal peptide spans 1–18 (MWLLILFLILSLGWNDAA). The propeptide at 19–24 (PPGQSR) is activation peptide. The Peptidase S1 domain maps to 25-258 (IIGGFNCEKN…FTSWMKKVMK (234 aa)). Intrachain disulfides connect Cys-31-Cys-173, Cys-50-Cys-66, Cys-152-Cys-219, Cys-184-Cys-198, and Cys-209-Cys-234. The Charge relay system role is filled by His-65. A glycan (N-linked (GlcNAc...) asparagine) is linked at Asn-108. The active-site Charge relay system is Asp-120. Ser-213 serves as the catalytic Charge relay system.

It belongs to the peptidase S1 family. Kallikrein subfamily.

The catalysed reaction is Preferential cleavage of Arg-|-Xaa bonds in small molecule substrates. Highly selective action to release kallidin (lysyl-bradykinin) from kininogen involves hydrolysis of Met-|-Xaa or Leu-|-Xaa.. In terms of biological role, glandular kallikreins cleave Met-Lys and Arg-Ser bonds in kininogen to release Lys-bradykinin. The protein is Prostatic glandular kallikrein-6 (Klk6) of Rattus norvegicus (Rat).